We begin with the raw amino-acid sequence, 368 residues long: Alanine racemase (368 aa).

Lys34 acts as the Proton acceptor; specific for D-alanine in catalysis. Residue Lys34 is modified to N6-(pyridoxal phosphate)lysine. Arg132 serves as a coordination point for substrate. The active-site Proton acceptor; specific for L-alanine is the Tyr261. Met309 contributes to the substrate binding site.

The protein belongs to the alanine racemase family. Pyridoxal 5'-phosphate is required as a cofactor.

The enzyme catalyses L-alanine = D-alanine. It functions in the pathway amino-acid biosynthesis; D-alanine biosynthesis; D-alanine from L-alanine: step 1/1. Functionally, catalyzes the interconversion of L-alanine and D-alanine. May also act on other amino acids. This Carboxydothermus hydrogenoformans (strain ATCC BAA-161 / DSM 6008 / Z-2901) protein is Alanine racemase (alr).